The following is a 185-amino-acid chain: Large ribosomal subunit protein uL5c (185 aa).

It belongs to the universal ribosomal protein uL5 family. Part of the 50S ribosomal subunit; contacts the 5S rRNA.

The protein resides in the plastid. The protein localises to the chloroplast. Binds 5S rRNA, forms part of the central protuberance of the 50S subunit. This is Large ribosomal subunit protein uL5c (rpl5) from Chlorokybus atmophyticus (Soil alga).